A 482-amino-acid chain; its full sequence is Iroquois-class homeodomain protein irx-5 (482 aa).

Positions 109 to 171 form a DNA-binding region, homeobox; it reads DPAYRKNATR…NARRRLKKEN (63 aa). Disordered regions lie at residues 173 to 307 and 462 to 482; these read MTWT…HQSH and QSQA…MSSI. Acidic residues predominate over residues 182–198; sequence EDEEDDENIDLEKNEED. The segment covering 199–256 has biased composition (basic and acidic residues); the sequence is DPRKLEEKGDQDGDAGDQKRSPSAVDFDRLEGEVRQGKELDQTRSDSEQNEVEERNDL. The span at 264 to 273 shows a compositional bias: pro residues; it reads PTSPLCPPDQ. Residues 284–305 show a composition bias toward basic residues; the sequence is HRHTVHNHHHQSIQQLHHHSHQ. Over residues 467–482 the composition is skewed to basic and acidic residues; the sequence is LNKDTPYEMKKGMSSI.

Belongs to the TALE/IRO homeobox family. As to expression, expressed in the neural plate in overlapping patterns with other irx members, which all share an anterior border of expression. Broadly expressed in the tailbud rhombencephalon (hindbrain). Outside the nervous system and at tailbud stages, expressed in the developing otic vesicle and branchial arches.

Its subcellular location is the nucleus. Acts partially redundantly with other irx members in neural patterning. Required for formation of the posterior forebrain, midbrain, hindbrain, and to a lesser extent, spinal cord. Patterns the neuroectoderm in both the anterior/posterior and dorsal/ventral axes. Does not appear to play a role in pronephros kidney development. Involved in craniofacial and gonadal development. Modulates the migration of progenitor cell populations in branchial arches and gonads by repressing CXCL12. This Xenopus tropicalis (Western clawed frog) protein is Iroquois-class homeodomain protein irx-5.